The chain runs to 795 residues: Levansucrase (795 aa).

The N-terminal stretch at 1–36 is a signal peptide; it reads METKVRKKMYKKGKFWVVATITTAMLTGIGLSSVQA. 2 stretches are compositionally biased toward polar residues: residues 42-66 and 112-130; these read TQVS…SAAE and QAAT…GQTN. Disordered regions lie at residues 42-83 and 103-138; these read TQVS…NPAA and ESKA…ATKE. The sucrose site is built by tryptophan 245, aspartate 246, and serine 315. Catalysis depends on aspartate 246, which acts as the Nucleophile. Aspartate 394 serves as a coordination point for Ca(2+). The sucrose site is built by arginine 399 and aspartate 400. Ca(2+)-binding residues include glutamine 425, asparagine 464, and aspartate 496. Sucrose is bound at residue glutamate 497. The Proton donor/acceptor role is filled by glutamate 499. Arginine 517 provides a ligand contact to sucrose. A helical transmembrane segment spans residues 774 to 794; that stretch reads GNSFFAALLALFSAFCVSIGF.

It belongs to the glycosyl hydrolase 68 family.

Its subcellular location is the cell membrane. The protein localises to the cell surface. It carries out the reaction [6)-beta-D-fructofuranosyl-(2-&gt;](n) alpha-D-glucopyranoside + sucrose = [6)-beta-D-fructofuranosyl-(2-&gt;](n+1) alpha-D-glucopyranoside + D-glucose. With respect to regulation, ca(2+) may play an important structural role and promote stability of levansucrase. Functionally, catalyzes the synthesis of levan, a fructose polymer, by transferring the fructosyl moiety from sucrose to a growing acceptor molecule. Also displays sucrose hydrolase activity. In Streptococcus mutans serotype c (strain ATCC 700610 / UA159), this protein is Levansucrase.